Reading from the N-terminus, the 757-residue chain is Inhibitor of nuclear factor kappa-B kinase subunit beta (757 aa).

Residues 15–300 enclose the Protein kinase domain; it reads WEMKERLGTG…DPQYGPNGCF (286 aa). ATP contacts are provided by residues 21 to 29 and Lys-44; that span reads LGTGGFGNV. Catalysis depends on Asp-145, which acts as the Proton acceptor. Residue Lys-163 forms a Glycyl lysine isopeptide (Lys-Gly) (interchain with G-Cter in ubiquitin) linkage. Phosphoserine; by TBK1 and PKC/PRKCZ is present on Ser-177. Position 179 is an S-nitrosocysteine (Cys-179). Ser-181 is subject to Phosphoserine; by TBK1, PKC/PRKCZ and PDPK1. Pro-191 carries the hydroxyproline modification. The leucine-zipper stretch occupies residues 458-479; it reads LLRNNSCLSKMKNAMASTAQQL. Position 670 is a phosphoserine; by autocatalysis (Ser-670). Position 672 is a phosphoserine (Ser-672). 8 positions are modified to phosphoserine; by autocatalysis: Ser-675, Ser-682, Ser-689, Ser-692, Ser-697, Ser-705, Ser-733, and Ser-740. The segment at 683-703 is disordered; it reads HPGQLMSQPSSACDSLPESDK. Residues 737–742 form an NEMO-binding region; the sequence is LDWSWL.

It belongs to the protein kinase superfamily. Ser/Thr protein kinase family. I-kappa-B kinase subfamily. As to quaternary structure, component of the I-kappa-B-kinase (IKK) core complex consisting of CHUK, IKBKB and IKBKG; probably four alpha/CHUK-beta/IKBKB dimers are associated with four gamma/IKBKG subunits. The IKK core complex seems to associate with regulatory or adapter proteins to form a IKK-signalosome holo-complex. The IKK complex associates with TERF2IP/RAP1, leading to promote IKK-mediated phosphorylation of RELA/p65. Part of a complex composed of NCOA2, NCOA3, CHUK/IKKA, IKBKB, IKBKG and CREBBP. Part of a 70-90 kDa complex at least consisting of CHUK/IKKA, IKBKB, NFKBIA, RELA, ELP1 and MAP3K14. Found in a membrane raft complex, at least composed of BCL10, CARD11, DPP4 and IKBKB. Interacts with SQSTM1 through PRKCZ or PRKCI. Forms an NGF-induced complex with IKBKB, PRKCI and TRAF6. May interact with MAVS/IPS1. Interacts with NALP2. Interacts with TICAM1. Interacts with FAF1; the interaction disrupts the IKK complex formation. Interacts with ATM. Part of a ternary complex consisting of TANK, IKBKB and IKBKG. Interacts with NIBP; the interaction is direct. Interacts with ARRB1 and ARRB2. Interacts with TRIM21. Interacts with NLRC5; prevents IKBKB phosphorylation and kinase activity. Interacts with PDPK1. Interacts with EIF2AK2/PKR. The phosphorylated form interacts with PPM1A and PPM1B. Interacts with ZNF268 isoform 2; the interaction is further increased in a TNF-alpha-dependent manner. Interacts with IKBKE. Interacts with ZC3H12A. Interacts with AKAP13. Interacts with LRRC14; disrupts IKBKB-IKBKG interaction preventing I-kappa-B-kinase (IKK) core complex formation and leading to a decrease of IKBKB phosphorylation and NF-kappaB activation. Interacts with SASH1. Interacts with ARFIP2. Interacts with FKBP5. Interacts with kinase TBK1; the complex interacts with STAT1, leading to phosphorylation of STAT1 on 'Thr-748' by IKBKB. Post-translationally, upon cytokine stimulation, phosphorylated on Ser-177 and Ser-181 by MEKK1 and/or MAP3K14/NIK as well as TBK1 and PRKCZ; which enhances activity. Phosphorylated by MAP3K7/TAK1 in response to NOD1 and NOD2 signaling, promoting activation and phosphorylation of NF-kappa-B inhibitors, leading to NF-kappa-B activation. Once activated, autophosphorylates on the C-terminal serine cluster; which decreases activity and prevents prolonged activation of the inflammatory response. Phosphorylated by the IKK-related kinases TBK1 and IKBKE, which is associated with reduced CHUK/IKKA and IKBKB activity and NF-kappa-B-dependent gene transcription. Dephosphorylated at Ser-177 and Ser-181 by PPM1A and PPM1B. Ubiquitinated. Monoubiquitination involves TRIM21 that leads to inhibition of Tax-induced NF-kappa-B signaling. 'Ser-163' may not serve as a monoubiquitination site. Ubiquitination on 'Ser-163' may modulate phosphorylation on C-terminal serine residues. In terms of processing, hydroxylated by PHD1/EGLN2, loss of hydroxylation under hypoxic conditions results in activation of NF-kappa-B. In terms of tissue distribution, detected in heart (at protein level). Expressed in liver, kidney and spleen.

It is found in the cytoplasm. The protein localises to the nucleus. It localises to the membrane raft. The catalysed reaction is L-seryl-[I-kappa-B protein] + ATP = O-phospho-L-seryl-[I-kappa-B protein] + ADP + H(+). The enzyme catalyses L-seryl-[protein] + ATP = O-phospho-L-seryl-[protein] + ADP + H(+). It catalyses the reaction L-threonyl-[protein] + ATP = O-phospho-L-threonyl-[protein] + ADP + H(+). Its function is as follows. Serine kinase that plays an essential role in the NF-kappa-B signaling pathway which is activated by multiple stimuli such as inflammatory cytokines, bacterial or viral products, DNA damages or other cellular stresses. Acts as a part of the canonical IKK complex in the conventional pathway of NF-kappa-B activation. Phosphorylates inhibitors of NF-kappa-B on 2 critical serine residues. These modifications allow polyubiquitination of the inhibitors and subsequent degradation by the proteasome. In turn, free NF-kappa-B is translocated into the nucleus and activates the transcription of hundreds of genes involved in immune response, growth control, or protection against apoptosis. In addition to the NF-kappa-B inhibitors, phosphorylates several other components of the signaling pathway including NEMO/IKBKG, NF-kappa-B subunits RELA and NFKB1, as well as IKK-related kinases TBK1 and IKBKE. IKK-related kinase phosphorylations may prevent the overproduction of inflammatory mediators since they exert a negative regulation on canonical IKKs. Phosphorylates FOXO3, mediating the TNF-dependent inactivation of this pro-apoptotic transcription factor. Also phosphorylates other substrates including NAA10, NCOA3, BCL10 and IRS1. Phosphorylates RIPK1 at 'Ser-25' which represses its kinase activity and consequently prevents TNF-mediated RIPK1-dependent cell death. Phosphorylates the C-terminus of IRF5, stimulating IRF5 homodimerization and translocation into the nucleus. Following bacterial lipopolysaccharide (LPS)-induced TLR4 endocytosis, phosphorylates STAT1 at 'Thr-748' which restricts interferon signaling and anti-inflammatory responses and promotes innate inflammatory responses. IKBKB-mediated phosphorylation of STAT1 at 'Thr-748' promotes binding of STAT1 to the ARID5A promoter, resulting in transcriptional activation of ARID5A and subsequent ARID5A-mediated stabilization of IL6. It also promotes binding of STAT1 to the IL12B promoter and activation of IL12B transcription. The chain is Inhibitor of nuclear factor kappa-B kinase subunit beta (Ikbkb) from Mus musculus (Mouse).